The following is a 196-amino-acid chain: Small ribosomal subunit protein uS4c (196 aa).

The S4 RNA-binding domain occupies 89 to 157; the sequence is MRLDNILFRL…VQNYIASSDP (69 aa).

The protein belongs to the universal ribosomal protein uS4 family. In terms of assembly, part of the 30S ribosomal subunit. Contacts protein S5. The interaction surface between S4 and S5 is involved in control of translational fidelity.

The protein resides in the plastid. It localises to the chloroplast. In terms of biological role, one of the primary rRNA binding proteins, it binds directly to 16S rRNA where it nucleates assembly of the body of the 30S subunit. With S5 and S12 plays an important role in translational accuracy. This Elymus canadensis (Canada wild rye) protein is Small ribosomal subunit protein uS4c (rps4).